Reading from the N-terminus, the 312-residue chain is Peroxisome biogenesis factor 2 (312 aa).

Over 1-22 (MAGAGGDKPFAKAGPSPLSRVL) the chain is Peroxisomal matrix. Residues 23–49 (RISQLDAFELDGALEQLVWSQFTQCFQ) form a helical membrane-spanning segment. The Cytoplasmic portion of the chain corresponds to 50 to 55 (HFKPGI). The helical transmembrane segment at 56–81 (LTPVEPELKALLQLLLWRFTIYSNSA) threads the bilayer. At 82 to 105 (TVGQSLLNIRYKNALIPGQKYRPM) the chain is on the peroxisomal matrix side. A helical transmembrane segment spans residues 106–132 (SRPQKFWFALLTVGEKWFRERSHSLFL). Topologically, residues 133 to 141 (NHPAESNAR) are cytoplasmic. Residues 142-168 (KARKVLSILLGLTKAASLVNFLLFLQR) form a helical membrane-spanning segment. At 169–195 (GTFPTLTERLLGVQPVFSRPQGPRDIN) the chain is on the peroxisomal matrix side. Residues 196 to 219 (FQYLNRELLWHGFAEFLIFLLPLI) traverse the membrane as a helical segment. Over 220–312 (NVWKLKAGVS…LQVGTELLQS (93 aa)) the chain is Cytoplasmic. Residues cysteine 252, cysteine 255, cysteine 267, histidine 269, cysteine 272, cysteine 275, cysteine 288, and cysteine 291 each contribute to the Zn(2+) site. The segment at 252–292 (CAICGEWPTMPHSIGCKHVFCYYCVKSNVIADIYFTCPKCG) adopts an RING-type zinc-finger fold.

Belongs to the pex2/pex10/pex12 family. Component of the PEX2-PEX10-PEX12 retrotranslocation channel.

It localises to the peroxisome membrane. It carries out the reaction [E2 ubiquitin-conjugating enzyme]-S-ubiquitinyl-L-cysteine + [acceptor protein]-L-cysteine = [E2 ubiquitin-conjugating enzyme]-L-cysteine + [acceptor protein]-S-ubiquitinyl-L-cysteine.. The catalysed reaction is S-ubiquitinyl-[E2 ubiquitin-conjugating enzyme]-L-cysteine + [acceptor protein]-L-lysine = [E2 ubiquitin-conjugating enzyme]-L-cysteine + N(6)-ubiquitinyl-[acceptor protein]-L-lysine.. Its pathway is protein modification; protein ubiquitination. Its function is as follows. E3 ubiquitin-protein ligase component of a retrotranslocation channel required for peroxisome organization by mediating export of the PEX5 receptor from peroxisomes to the cytosol, thereby promoting PEX5 recycling. The retrotranslocation channel is composed of PEX2, PEX10 and PEX12; each subunit contributing transmembrane segments that coassemble into an open channel that specifically allows the passage of PEX5 through the peroxisomal membrane. PEX2 also regulates peroxisome organization by acting as a E3 ubiquitin-protein ligase. The polypeptide is Peroxisome biogenesis factor 2 (pex2) (Danio rerio (Zebrafish)).